A 291-amino-acid chain; its full sequence is Protease HtpX (291 aa).

The next 2 helical transmembrane spans lie at 4 to 24 (IILF…ILSF) and 32 to 52 (ISGL…ISLL). Zn(2+) is bound at residue H139. The active site involves E140. H143 provides a ligand contact to Zn(2+). The next 2 membrane-spanning stretches (helical) occupy residues 158-178 (IVNT…SSIL) and 192-212 (WVYI…ASII). Zn(2+) is bound at residue E221.

The protein belongs to the peptidase M48B family. It depends on Zn(2+) as a cofactor.

It is found in the cell membrane. In Buchnera aphidicola subsp. Baizongia pistaciae (strain Bp), this protein is Protease HtpX.